The primary structure comprises 600 residues: Aspartate--tRNA(Asp/Asn) ligase (600 aa).

Glu-174 lines the L-aspartate pocket. The interval 198-201 (QLFK) is aspartate. Residue Arg-220 coordinates L-aspartate. ATP-binding positions include 220–222 (RDE) and Gln-229. Residue His-457 participates in L-aspartate binding. ATP is bound at residue Glu-491. Arg-498 provides a ligand contact to L-aspartate. 543–546 (GLDR) provides a ligand contact to ATP.

The protein belongs to the class-II aminoacyl-tRNA synthetase family. Type 1 subfamily. Homodimer.

It localises to the cytoplasm. The catalysed reaction is tRNA(Asx) + L-aspartate + ATP = L-aspartyl-tRNA(Asx) + AMP + diphosphate. Aspartyl-tRNA synthetase with relaxed tRNA specificity since it is able to aspartylate not only its cognate tRNA(Asp) but also tRNA(Asn). Reaction proceeds in two steps: L-aspartate is first activated by ATP to form Asp-AMP and then transferred to the acceptor end of tRNA(Asp/Asn). The protein is Aspartate--tRNA(Asp/Asn) ligase of Burkholderia multivorans (strain ATCC 17616 / 249).